A 694-amino-acid chain; its full sequence is Elongation factor G (694 aa).

The tr-type G domain occupies 10–285 (EKTRNIGIMA…GVVDYLPSPL (276 aa)). Residues 19–26 (AHIDAGKT), 83–87 (DTPGH), and 137–140 (NKMD) each bind GTP.

Belongs to the TRAFAC class translation factor GTPase superfamily. Classic translation factor GTPase family. EF-G/EF-2 subfamily.

The protein localises to the cytoplasm. Functionally, catalyzes the GTP-dependent ribosomal translocation step during translation elongation. During this step, the ribosome changes from the pre-translocational (PRE) to the post-translocational (POST) state as the newly formed A-site-bound peptidyl-tRNA and P-site-bound deacylated tRNA move to the P and E sites, respectively. Catalyzes the coordinated movement of the two tRNA molecules, the mRNA and conformational changes in the ribosome. The chain is Elongation factor G from Lactobacillus delbrueckii subsp. bulgaricus (strain ATCC BAA-365 / Lb-18).